The following is a 1137-amino-acid chain: Eukaryotic translation initiation factor 3 subunit A (1137 aa).

The PCI domain occupies 319–501 (LQRMAAHVLL…NSIYFGTDLT (183 aa)). Composition is skewed to basic and acidic residues over residues 588–623 (QNNAREEEEARRQEEESRKAKLAEQKRLEQEQEERE) and 829–899 (AAEE…RGGD). Disordered stretches follow at residues 588-631 (QNNA…QNEI) and 829-1137 (AAEE…VKRR). S908 is modified (phosphoserine). Composition is skewed to basic and acidic residues over residues 922–971 (RGIE…EPDS), 985–1046 (SRDE…EPQR), 1054–1083 (DAPRHADRENRRTAGGERRDRDVRETRGDQ), and 1106–1127 (AREEKPATKRDQPQEKENKAAD).

It belongs to the eIF-3 subunit A family. As to quaternary structure, component of the eukaryotic translation initiation factor 3 (eIF-3) complex. The eIF-3 complex interacts with pix.

The protein resides in the cytoplasm. RNA-binding component of the eukaryotic translation initiation factor 3 (eIF-3) complex, which is involved in protein synthesis of a specialized repertoire of mRNAs and, together with other initiation factors, stimulates binding of mRNA and methionyl-tRNAi to the 40S ribosome. The eIF-3 complex specifically targets and initiates translation of a subset of mRNAs involved in cell proliferation. The protein is Eukaryotic translation initiation factor 3 subunit A of Drosophila yakuba (Fruit fly).